Reading from the N-terminus, the 429-residue chain is Ribosomal RNA small subunit methyltransferase B (429 aa).

Residues 254–260 (CAAPGGK), D277, D303, and D322 contribute to the S-adenosyl-L-methionine site. The active-site Nucleophile is C375.

The protein belongs to the class I-like SAM-binding methyltransferase superfamily. RsmB/NOP family.

It is found in the cytoplasm. The catalysed reaction is cytidine(967) in 16S rRNA + S-adenosyl-L-methionine = 5-methylcytidine(967) in 16S rRNA + S-adenosyl-L-homocysteine + H(+). Specifically methylates the cytosine at position 967 (m5C967) of 16S rRNA. The protein is Ribosomal RNA small subunit methyltransferase B of Serratia proteamaculans (strain 568).